Here is an 88-residue protein sequence, read N- to C-terminus: Small ribosomal subunit protein uS15 (88 aa).

The protein belongs to the universal ribosomal protein uS15 family. In terms of assembly, part of the 30S ribosomal subunit. Forms a bridge to the 50S subunit in the 70S ribosome, contacting the 23S rRNA.

In terms of biological role, one of the primary rRNA binding proteins, it binds directly to 16S rRNA where it helps nucleate assembly of the platform of the 30S subunit by binding and bridging several RNA helices of the 16S rRNA. Its function is as follows. Forms an intersubunit bridge (bridge B4) with the 23S rRNA of the 50S subunit in the ribosome. The protein is Small ribosomal subunit protein uS15 of Borrelia turicatae (strain 91E135).